Here is a 541-residue protein sequence, read N- to C-terminus: MGCIKSKEDKGPAMKYRTDNTPEPISSHVSHYGSDSSQATQSPAIKGSAVNFNSHSMTPFGGPSGMTPFGGASSSFSAVPSPYPSTLTGGVTVFVALYDYEARTTDDLSFKKGERFQIINNTEGDWWEARSIATGKTGYIPSNYVAPADSIQAEEWYFGKMGRKDAERLLLNPGNQRGIFLVRESETTKGAYSLSIRDWDEVRGDNVKHYKIRKLDNGGYYITTRAQFESLQKLVKHYREHADGLCHKLTTVCPTVKPQTQGLAKDAWEIPRESLRLEVKLGQGCFGEVWMGTWNGTTKVAIKTLKPGTMMPEAFLQEAQIMKKLRHDKLVPLYAVVSEEPIYIVTEFMTKGSLLDFLKEGEGKFLKLPQLVDMAAQIADGMAYIERMNYIHRDLRAANILVGDNLVCKIADFGLARLIEDNEYTARQGAKFPIKWTAPEAALYGRFTIKSDVWSFGILLTELVTKGRVPYPGMVNREVLEQVERGYRMPCPQGCPESLHELMKLCWKKDPDERPTFEYIQSFLEDYFTATEPQYQPGDNL.

Basic and acidic residues predominate over residues 1-20; sequence MGCIKSKEDKGPAMKYRTDN. A disordered region spans residues 1 to 43; it reads MGCIKSKEDKGPAMKYRTDNTPEPISSHVSHYGSDSSQATQSP. Residue Gly-2 is the site of N-myristoyl glycine attachment. The S-palmitoyl cysteine; in membrane form moiety is linked to residue Cys-3. Positions 26–37 are enriched in low complexity; the sequence is SSHVSHYGSDSS. Residues 89-150 enclose the SH3 domain; it reads GGVTVFVALY…PSNYVAPADS (62 aa). Residues 156–253 enclose the SH2 domain; it reads WYFGKMGRKD…GLCHKLTTVC (98 aa). Residues 275–528 enclose the Protein kinase domain; that stretch reads LRLEVKLGQG…YIQSFLEDYF (254 aa). Residues 281-289 and Lys-303 each bind ATP; that span reads LGQGCFGEV. Asp-394 serves as the catalytic Proton acceptor. At Tyr-424 the chain carries Phosphotyrosine; by autocatalysis. A Phosphotyrosine; by CSK modification is found at Tyr-535.

This sequence belongs to the protein kinase superfamily. Tyr protein kinase family. SRC subfamily. Post-translationally, autophosphorylation at Tyr-424 maintains enzyme activity. In terms of processing, palmitoylation at Cys-3 promotes membrane localization.

It is found in the cell membrane. It localises to the cytoplasm. Its subcellular location is the cytoskeleton. The protein resides in the microtubule organizing center. The protein localises to the centrosome. It is found in the cytosol. It localises to the cell junction. It carries out the reaction L-tyrosyl-[protein] + ATP = O-phospho-L-tyrosyl-[protein] + ADP + H(+). Non-receptor protein tyrosine kinase that is involved in the regulation of cell growth and survival, apoptosis, cell-cell adhesion, cytoskeleton remodeling, differentiation, G2/M progression and cytokinesis. The protein is Tyrosine-protein kinase Yes (YES1) of Gallus gallus (Chicken).